A 50-amino-acid chain; its full sequence is Small ribosomal subunit protein eS31 (50 aa).

Residues C22, C25, C40, and C43 each coordinate Zn(2+). The C4-type zinc-finger motif lies at 22–43 (CPRCGPGVFMADHGDRWACGKC).

Belongs to the eukaryotic ribosomal protein eS31 family. In terms of assembly, part of the 30S ribosomal subunit. Zn(2+) serves as cofactor.

The protein is Small ribosomal subunit protein eS31 of Pyrococcus horikoshii (strain ATCC 700860 / DSM 12428 / JCM 9974 / NBRC 100139 / OT-3).